The following is a 332-amino-acid chain: Adenine deaminase (332 aa).

3 residues coordinate Zn(2+): H16, H18, and H196. The Proton donor role is filled by E199. Position 277 (D277) interacts with Zn(2+). Substrate is bound at residue D278.

Belongs to the metallo-dependent hydrolases superfamily. Adenosine and AMP deaminases family. Adenine deaminase type 2 subfamily. Zn(2+) serves as cofactor.

It catalyses the reaction adenine + H2O + H(+) = hypoxanthine + NH4(+). Its function is as follows. Catalyzes the hydrolytic deamination of adenine to hypoxanthine. Plays an important role in the purine salvage pathway and in nitrogen catabolism. This Acinetobacter baylyi (strain ATCC 33305 / BD413 / ADP1) protein is Adenine deaminase.